The primary structure comprises 193 residues: Potassium-transporting ATPase KdpC subunit (193 aa).

A helical membrane pass occupies residues 7 to 27; sequence PLVVIFVVLTAVTGLAYPAVM.

The protein belongs to the KdpC family. In terms of assembly, the system is composed of three essential subunits: KdpA, KdpB and KdpC.

The protein localises to the cell inner membrane. Part of the high-affinity ATP-driven potassium transport (or Kdp) system, which catalyzes the hydrolysis of ATP coupled with the electrogenic transport of potassium into the cytoplasm. This subunit acts as a catalytic chaperone that increases the ATP-binding affinity of the ATP-hydrolyzing subunit KdpB by the formation of a transient KdpB/KdpC/ATP ternary complex. This chain is Potassium-transporting ATPase KdpC subunit, found in Burkholderia ambifaria (strain ATCC BAA-244 / DSM 16087 / CCUG 44356 / LMG 19182 / AMMD) (Burkholderia cepacia (strain AMMD)).